The sequence spans 1276 residues: Probable ubiquitin carboxyl-terminal hydrolase K02C4.3 (1276 aa).

Positions 168-762 constitute a USP domain; sequence TGLYNSGNTC…SAYMLMYVRS (595 aa). Cys-177 acts as the Nucleophile in catalysis. The disordered stretch occupies residues 375 to 402; it reads SMDTEAATSSNLPGNSVENHPNPAAPEV. Residues 380-393 are compositionally biased toward polar residues; it reads AATSSNLPGNSVEN. His-707 functions as the Proton acceptor in the catalytic mechanism.

It belongs to the peptidase C19 family.

The enzyme catalyses Thiol-dependent hydrolysis of ester, thioester, amide, peptide and isopeptide bonds formed by the C-terminal Gly of ubiquitin (a 76-residue protein attached to proteins as an intracellular targeting signal).. The protein is Probable ubiquitin carboxyl-terminal hydrolase K02C4.3 of Caenorhabditis elegans.